The primary structure comprises 462 residues: 3-oxoacyl-[acyl-carrier-protein] synthase I, chloroplastic (462 aa).

Residues 1-35 constitute a chloroplast transit peptide; the sequence is MHAHAAHALGLRVPPPAFPRRRARPRRRPAAAVLA. A disordered region spans residues 1–45; the sequence is MHAHAAHALGLRVPPPAFPRRRARPRRRPAAAVLATSAAPQRETD. The span at 19 to 29 shows a compositional bias: basic residues; it reads PRRRARPRRRP. A compositionally biased stretch (low complexity) spans 30–39; the sequence is AAAVLATSAA. One can recognise a Ketosynthase family 3 (KS3) domain in the interval 47–459; that stretch reads RKRVVITGMG…GHNSVVVFAP (413 aa). Residues Cys-213, His-353, and His-389 each act as for beta-ketoacyl synthase activity in the active site.

It belongs to the thiolase-like superfamily. Beta-ketoacyl-ACP synthases family. In terms of assembly, homodimer.

The protein resides in the plastid. Its subcellular location is the chloroplast. It catalyses the reaction a fatty acyl-[ACP] + malonyl-[ACP] + H(+) = a 3-oxoacyl-[ACP] + holo-[ACP] + CO2. Functionally, catalyzes the condensation reaction of fatty acid synthesis by the addition to an acyl acceptor of two carbons from malonyl-ACP. Specific for elongation from C-10 to unsaturated C-16 and C-18 fatty acids. This Hordeum vulgare (Barley) protein is 3-oxoacyl-[acyl-carrier-protein] synthase I, chloroplastic (KAS12).